The sequence spans 174 residues: Crossover junction endodeoxyribonuclease RuvC (174 aa).

Residues aspartate 8, glutamate 67, and aspartate 139 contribute to the active site. Aspartate 8, glutamate 67, and aspartate 139 together coordinate Mg(2+).

It belongs to the RuvC family. Homodimer which binds Holliday junction (HJ) DNA. The HJ becomes 2-fold symmetrical on binding to RuvC with unstacked arms; it has a different conformation from HJ DNA in complex with RuvA. In the full resolvosome a probable DNA-RuvA(4)-RuvB(12)-RuvC(2) complex forms which resolves the HJ. It depends on Mg(2+) as a cofactor.

The protein localises to the cytoplasm. It catalyses the reaction Endonucleolytic cleavage at a junction such as a reciprocal single-stranded crossover between two homologous DNA duplexes (Holliday junction).. Its function is as follows. The RuvA-RuvB-RuvC complex processes Holliday junction (HJ) DNA during genetic recombination and DNA repair. Endonuclease that resolves HJ intermediates. Cleaves cruciform DNA by making single-stranded nicks across the HJ at symmetrical positions within the homologous arms, yielding a 5'-phosphate and a 3'-hydroxyl group; requires a central core of homology in the junction. The consensus cleavage sequence is 5'-(A/T)TT(C/G)-3'. Cleavage occurs on the 3'-side of the TT dinucleotide at the point of strand exchange. HJ branch migration catalyzed by RuvA-RuvB allows RuvC to scan DNA until it finds its consensus sequence, where it cleaves and resolves the cruciform DNA. This Pseudomonas entomophila (strain L48) protein is Crossover junction endodeoxyribonuclease RuvC.